We begin with the raw amino-acid sequence, 39 residues long: Cytochrome b559 subunit beta (39 aa).

A helical membrane pass occupies residues 14–30 (WLAVHGLAVPTVFFLGS). A heme-binding site is contributed by histidine 18.

The protein belongs to the PsbE/PsbF family. As to quaternary structure, heterodimer of an alpha subunit and a beta subunit. PSII is composed of 1 copy each of membrane proteins PsbA, PsbB, PsbC, PsbD, PsbE, PsbF, PsbH, PsbI, PsbJ, PsbK, PsbL, PsbM, PsbT, PsbX, PsbY, PsbZ, Psb30/Ycf12, at least 3 peripheral proteins of the oxygen-evolving complex and a large number of cofactors. It forms dimeric complexes. Requires heme b as cofactor.

The protein resides in the plastid. It is found in the chloroplast thylakoid membrane. Functionally, this b-type cytochrome is tightly associated with the reaction center of photosystem II (PSII). PSII is a light-driven water:plastoquinone oxidoreductase that uses light energy to abstract electrons from H(2)O, generating O(2) and a proton gradient subsequently used for ATP formation. It consists of a core antenna complex that captures photons, and an electron transfer chain that converts photonic excitation into a charge separation. This Cedrus deodara (Deodar cedar) protein is Cytochrome b559 subunit beta.